The chain runs to 721 residues: Photosystem I P700 chlorophyll a apoprotein A1 (721 aa).

Transmembrane regions (helical) follow at residues 61–84 (VFSA…FHGA), 147–170 (LYCT…FHYH), 186–210 (LNHH…HVSL), 282–300 (TAHH…GHMY), 337–360 (WHAQ…HHMY), 376–402 (LSLF…IFMV), 424–446 (AIVS…LYIH), and 522–540 (FLVH…LILL). Residues cysteine 564 and cysteine 573 each contribute to the [4Fe-4S] cluster site. 2 helical membrane passes run 580–601 (HVFL…HFSW) and 655–677 (LSAY…MFLF). Histidine 666 lines the chlorophyll a' pocket. Residues methionine 674 and tyrosine 682 each contribute to the chlorophyll a site. Position 683 (tryptophan 683) interacts with phylloquinone. The helical transmembrane segment at 715–721 (AVGVAHY) threads the bilayer.

Belongs to the PsaA/PsaB family. The PsaA/B heterodimer binds the P700 chlorophyll special pair and subsequent electron acceptors. PSI consists of a core antenna complex that captures photons, and an electron transfer chain that converts photonic excitation into a charge separation. The eukaryotic PSI reaction center is composed of at least 11 subunits. The cofactor is P700 is a chlorophyll a/chlorophyll a' dimer, A0 is one or more chlorophyll a, A1 is one or both phylloquinones and FX is a shared 4Fe-4S iron-sulfur center..

The protein resides in the plastid. The protein localises to the chloroplast thylakoid membrane. It catalyses the reaction reduced [plastocyanin] + hnu + oxidized [2Fe-2S]-[ferredoxin] = oxidized [plastocyanin] + reduced [2Fe-2S]-[ferredoxin]. In terms of biological role, psaA and PsaB bind P700, the primary electron donor of photosystem I (PSI), as well as the electron acceptors A0, A1 and FX. PSI is a plastocyanin-ferredoxin oxidoreductase, converting photonic excitation into a charge separation, which transfers an electron from the donor P700 chlorophyll pair to the spectroscopically characterized acceptors A0, A1, FX, FA and FB in turn. Oxidized P700 is reduced on the lumenal side of the thylakoid membrane by plastocyanin. In Ginkgo biloba (Ginkgo), this protein is Photosystem I P700 chlorophyll a apoprotein A1.